A 332-amino-acid polypeptide reads, in one-letter code: tRNA dimethylallyltransferase 2 (332 aa).

Gly-15–Thr-22 lines the ATP pocket. Thr-17–Thr-22 provides a ligand contact to substrate. Interaction with substrate tRNA stretches follow at residues Asp-40–Met-43 and Gln-164–Arg-168.

The protein belongs to the IPP transferase family. Monomer. Mg(2+) is required as a cofactor.

The enzyme catalyses adenosine(37) in tRNA + dimethylallyl diphosphate = N(6)-dimethylallyladenosine(37) in tRNA + diphosphate. Functionally, catalyzes the transfer of a dimethylallyl group onto the adenine at position 37 in tRNAs that read codons beginning with uridine, leading to the formation of N6-(dimethylallyl)adenosine (i(6)A). This chain is tRNA dimethylallyltransferase 2, found in Hahella chejuensis (strain KCTC 2396).